Here is a 288-residue protein sequence, read N- to C-terminus: ATP synthase gamma chain (288 aa).

It belongs to the ATPase gamma chain family. As to quaternary structure, F-type ATPases have 2 components, CF(1) - the catalytic core - and CF(0) - the membrane proton channel. CF(1) has five subunits: alpha(3), beta(3), gamma(1), delta(1), epsilon(1). CF(0) has three main subunits: a, b and c.

The protein resides in the cell membrane. In terms of biological role, produces ATP from ADP in the presence of a proton gradient across the membrane. The gamma chain is believed to be important in regulating ATPase activity and the flow of protons through the CF(0) complex. The chain is ATP synthase gamma chain from Shouchella clausii (strain KSM-K16) (Alkalihalobacillus clausii).